Here is an 892-residue protein sequence, read N- to C-terminus: Smad protein daf-3 (892 aa).

Disordered stretches follow at residues 1–43 (MGDH…GLED) and 135–161 (PYLD…FDTK). Positions 15–26 (IPPQFNYSQPGT) are enriched in polar residues. The region spanning 198 to 347 (KIVEYLMYYR…YEIVIGTMIV (150 aa)) is the MH1 domain. Residues 505-552 (YPDFHHPFNQQPHQPPQLSQNHTSQQGSHQPGHQGQVPNDPPISRPVL) are disordered. Residues 528 to 540 (SQQGSHQPGHQGQ) are compositionally biased toward low complexity. The 224-residue stretch at 657-880 (WGTIVYYEKN…TNCFEPLGME (224 aa)) folds into the MH2 domain.

It belongs to the dwarfin/SMAD family. As to quaternary structure, interacts with R-SMADs daf-8 and daf-14. Interacts with daf-14 in a daf-8 dependent manner. May interact with daf-5.

It is found in the cytoplasm. It localises to the nucleus. Its subcellular location is the chromosome. Functionally, transcriptional regulator and common SMAD (co-SMAD), required to regulate entry into a developmentally arrested larval state known as dauer, in response to harsh environmental conditions. Probable component of transcriptional regulatory complex with SMAD protein daf-5. Acts antagonistically to SMAD signaling downstream of TGF-beta-like daf-7 signaling. Binds to the 5'-GTCTG-3' motif found in regulatory regions and may modulate the expression of genes involved in TGF-beta-like daf-7 and Notch lag-2 signaling. May regulate gene expression outside the dauer pathway. The sequence is that of Smad protein daf-3 from Caenorhabditis elegans.